We begin with the raw amino-acid sequence, 1220 residues long: DNA polymerase catalytic subunit (1220 aa).

2 disordered regions span residues 21–43 (GKRP…RPPQ) and 641–691 (QADA…KPGV). Polar residues predominate over residues 646–660 (SETSELAMDSQSHAF).

Belongs to the DNA polymerase type-B family. In terms of assembly, forms a complex with the ssDNA-binding protein, the DNA polymerase processivity factor, and the alkaline exonuclease. Interacts with the helicase-primase complex composed of the primase, the helicase and the primase-associated factor; this interaction may coordinate leading and lagging strand DNA synthesis at the replication fork.

The protein localises to the host nucleus. The catalysed reaction is DNA(n) + a 2'-deoxyribonucleoside 5'-triphosphate = DNA(n+1) + diphosphate. The enzyme catalyses Endonucleolytic cleavage to 5'-phosphomonoester.. In terms of biological role, replicates viral genomic DNA. The replication complex is composed of six viral proteins: the DNA polymerase, processivity factor, primase, primase-associated factor, helicase, and ssDNA-binding protein. Additionally, the polymerase contains an intrinsic ribonuclease H (RNase H) activity that specifically degrades RNA/DNA heteroduplexes or duplex DNA substrates in the 5' to 3' direction. Therefore, it can catalyze the excision of the RNA primers that initiate the synthesis of Okazaki fragments at a replication fork during viral DNA replication. This chain is DNA polymerase catalytic subunit, found in Equus caballus (Horse).